The following is a 148-amino-acid chain: Large ribosomal subunit protein bL9 (148 aa).

Belongs to the bacterial ribosomal protein bL9 family.

In terms of biological role, binds to the 23S rRNA. This is Large ribosomal subunit protein bL9 from Desulfitobacterium hafniense (strain DSM 10664 / DCB-2).